The following is a 783-amino-acid chain: LPS-assembly protein LptD (783 aa).

A signal peptide spans M1 to A24.

Belongs to the LptD family. In terms of assembly, component of the lipopolysaccharide transport and assembly complex. Interacts with LptE and LptA.

The protein localises to the cell outer membrane. Functionally, together with LptE, is involved in the assembly of lipopolysaccharide (LPS) at the surface of the outer membrane. The sequence is that of LPS-assembly protein LptD from Mannheimia succiniciproducens (strain KCTC 0769BP / MBEL55E).